The following is a 501-amino-acid chain: Glycerol kinase 1 (501 aa).

Residue Thr16 coordinates ADP. Positions 16, 17, and 18 each coordinate ATP. Thr16 contributes to the sn-glycerol 3-phosphate binding site. Arg20 serves as a coordination point for ADP. 4 residues coordinate sn-glycerol 3-phosphate: Arg84, Glu85, Tyr135, and Asp242. Arg84, Glu85, Tyr135, Asp242, and Gln243 together coordinate glycerol. ADP is bound by residues Thr264 and Gly307. ATP is bound by residues Thr264, Gly307, Gln311, and Gly408. Gly408 is a binding site for ADP.

The protein belongs to the FGGY kinase family.

It carries out the reaction glycerol + ATP = sn-glycerol 3-phosphate + ADP + H(+). The protein operates within polyol metabolism; glycerol degradation via glycerol kinase pathway; sn-glycerol 3-phosphate from glycerol: step 1/1. In terms of biological role, key enzyme in the regulation of glycerol uptake and metabolism. Catalyzes the phosphorylation of glycerol to yield sn-glycerol 3-phosphate. The chain is Glycerol kinase 1 from Saccharolobus solfataricus (strain ATCC 35092 / DSM 1617 / JCM 11322 / P2) (Sulfolobus solfataricus).